The chain runs to 712 residues: Satratoxin biosynthesis SC3 cluster transcription factor SAT20 (712 aa).

4 stretches are compositionally biased toward polar residues: residues 1–10 (MPNLPGSSDS), 25–36 (CSSTKPNAAQEN), 131–145 (SEPS…WPSL), and 269–282 (SLPS…SSTG). 3 disordered regions span residues 1-43 (MPNL…ELAQ), 115-145 (SQNA…WPSL), and 264-294 (PVSG…KADR). A DNA-binding region (zn(2)-C6 fungal-type) is located at residues 306–339 (CFRCRMYKENCDPGLPCKNCMRVQVTRRTFFGPC). A coiled-coil region spans residues 530–560 (QIQIMVAQVMLDKQKNALKRLQERALSKNRH).

The protein resides in the nucleus. Transcriptional regulator that may regulate the expression of the satratoxin biosynthesis SC3 cluster, one of the 3 clusters involved in the biosynthesis of satratoxins, trichothecene mycotoxins that are associated with human food poisonings. The chain is Satratoxin biosynthesis SC3 cluster transcription factor SAT20 from Stachybotrys chartarum (strain CBS 109288 / IBT 7711) (Toxic black mold).